The sequence spans 348 residues: Ferredoxin--NADP reductase 1 (348 aa).

Asp33, Lys41, Tyr45, Val85, Leu120, Asp287, and Ser328 together coordinate FAD.

This sequence belongs to the ferredoxin--NADP reductase type 2 family. In terms of assembly, homodimer. It depends on FAD as a cofactor.

It catalyses the reaction 2 reduced [2Fe-2S]-[ferredoxin] + NADP(+) + H(+) = 2 oxidized [2Fe-2S]-[ferredoxin] + NADPH. The polypeptide is Ferredoxin--NADP reductase 1 (Oceanobacillus iheyensis (strain DSM 14371 / CIP 107618 / JCM 11309 / KCTC 3954 / HTE831)).